A 152-amino-acid chain; its full sequence is Deoxyuridine 5'-triphosphate nucleotidohydrolase (152 aa).

Substrate is bound by residues Arg72–Gly74, Asn85, and Thr89–Asp91.

The protein belongs to the dUTPase family. It depends on Mg(2+) as a cofactor.

It carries out the reaction dUTP + H2O = dUMP + diphosphate + H(+). Its pathway is pyrimidine metabolism; dUMP biosynthesis; dUMP from dCTP (dUTP route): step 2/2. Functionally, this enzyme is involved in nucleotide metabolism: it produces dUMP, the immediate precursor of thymidine nucleotides and it decreases the intracellular concentration of dUTP so that uracil cannot be incorporated into DNA. The sequence is that of Deoxyuridine 5'-triphosphate nucleotidohydrolase from Nitrobacter winogradskyi (strain ATCC 25391 / DSM 10237 / CIP 104748 / NCIMB 11846 / Nb-255).